The chain runs to 90 residues: UPF0223 protein LMHCC_1569 (90 aa).

This sequence belongs to the UPF0223 family.

The sequence is that of UPF0223 protein LMHCC_1569 from Listeria monocytogenes serotype 4a (strain HCC23).